A 276-amino-acid chain; its full sequence is Tryptophan synthase alpha chain (276 aa).

Active-site proton acceptor residues include E49 and D60.

This sequence belongs to the TrpA family. Tetramer of two alpha and two beta chains.

The enzyme catalyses (1S,2R)-1-C-(indol-3-yl)glycerol 3-phosphate + L-serine = D-glyceraldehyde 3-phosphate + L-tryptophan + H2O. It participates in amino-acid biosynthesis; L-tryptophan biosynthesis; L-tryptophan from chorismate: step 5/5. Its function is as follows. The alpha subunit is responsible for the aldol cleavage of indoleglycerol phosphate to indole and glyceraldehyde 3-phosphate. In Acidiphilium cryptum (strain JF-5), this protein is Tryptophan synthase alpha chain.